A 215-amino-acid chain; its full sequence is Pyrophosphatase PpaX (215 aa).

Residue Asp9 is the Nucleophile of the active site.

The protein belongs to the HAD-like hydrolase superfamily. PpaX family. Mg(2+) is required as a cofactor.

It catalyses the reaction diphosphate + H2O = 2 phosphate + H(+). Functionally, hydrolyzes pyrophosphate formed during P-Ser-HPr dephosphorylation by HPrK/P. Might play a role in controlling the intracellular pyrophosphate pool. This Anoxybacillus flavithermus (strain DSM 21510 / WK1) protein is Pyrophosphatase PpaX.